We begin with the raw amino-acid sequence, 144 residues long: MKIMVINGPNLNLLGIREKEIYGAKDFNQVIDYIKEEGKELGLEVNCFQSNIEGEIINFIHNAYFEKYDGIIINPGAYTHYSIAIYDALKGVEIPTVEVHLSNIHKREEFRHKSVTAPACIGQISGFGEYGYIMAMNALKNKIK.

Tyr-22 functions as the Proton acceptor in the catalytic mechanism. Residues Asn-74, His-80, and Asp-87 each contribute to the substrate site. Residue His-100 is the Proton donor of the active site. Substrate contacts are provided by residues 101–102 and Arg-111; that span reads LS.

It belongs to the type-II 3-dehydroquinase family. As to quaternary structure, homododecamer.

The catalysed reaction is 3-dehydroquinate = 3-dehydroshikimate + H2O. Its pathway is metabolic intermediate biosynthesis; chorismate biosynthesis; chorismate from D-erythrose 4-phosphate and phosphoenolpyruvate: step 3/7. Catalyzes a trans-dehydration via an enolate intermediate. The protein is 3-dehydroquinate dehydratase of Clostridium perfringens (strain ATCC 13124 / DSM 756 / JCM 1290 / NCIMB 6125 / NCTC 8237 / Type A).